A 94-amino-acid polypeptide reads, in one-letter code: Large ribosomal subunit protein eL42 (94 aa).

The Zn(2+) site is built by C11, C14, C71, and C74. A C4-type zinc finger spans residues 11 to 74 (CPYCKRHTIH…LDLRFVCTVC (64 aa)).

It belongs to the eukaryotic ribosomal protein eL42 family. Part of the 50S ribosomal subunit. Zn(2+) is required as a cofactor.

Functionally, binds to the 23S rRNA. This chain is Large ribosomal subunit protein eL42, found in Pyrococcus horikoshii (strain ATCC 700860 / DSM 12428 / JCM 9974 / NBRC 100139 / OT-3).